A 142-amino-acid chain; its full sequence is Cystatin-8 (142 aa).

The N-terminal stretch at 1–19 (MAKPLWLSLILFIIPVALA) is a signal peptide. An N-linked (GlcNAc...) asparagine glycan is attached at Asn39. Positions 77 to 81 (QITDR) match the Secondary area of contact motif. Cystine bridges form between Cys95-Cys105 and Cys119-Cys139. Asn100 is a glycosylation site (N-linked (GlcNAc...) asparagine).

This sequence belongs to the cystatin family. As to expression, proximal caput region of the epididymis. Lower expression in the testis. Within the testis it is localized to the elongating spermatids, whereas within the epididymis it is exclusively synthesized by the proximal caput epithelium.

The protein localises to the secreted. Functionally, performs a specialized role during sperm development and maturation. This Mus musculus (Mouse) protein is Cystatin-8 (Cst8).